Consider the following 345-residue polypeptide: 4-hydroxy-3-methylbut-2-en-1-yl diphosphate synthase (flavodoxin) (345 aa).

[4Fe-4S] cluster contacts are provided by cysteine 271, cysteine 274, cysteine 306, and glutamate 313.

It belongs to the IspG family. [4Fe-4S] cluster serves as cofactor.

The catalysed reaction is (2E)-4-hydroxy-3-methylbut-2-enyl diphosphate + oxidized [flavodoxin] + H2O + 2 H(+) = 2-C-methyl-D-erythritol 2,4-cyclic diphosphate + reduced [flavodoxin]. It participates in isoprenoid biosynthesis; isopentenyl diphosphate biosynthesis via DXP pathway; isopentenyl diphosphate from 1-deoxy-D-xylulose 5-phosphate: step 5/6. Its function is as follows. Converts 2C-methyl-D-erythritol 2,4-cyclodiphosphate (ME-2,4cPP) into 1-hydroxy-2-methyl-2-(E)-butenyl 4-diphosphate. In Haemophilus influenzae (strain PittEE), this protein is 4-hydroxy-3-methylbut-2-en-1-yl diphosphate synthase (flavodoxin).